The primary structure comprises 464 residues: Calcitonin gene-related peptide type 1 receptor (464 aa).

A signal peptide spans 1 to 23 (MMDKKCTLCFLFLLLLNMALIAA). Residues 24–139 (ESEEGANQTD…STHEKVKTAL (116 aa)) lie on the Extracellular side of the membrane. N-linked (GlcNAc...) asparagine glycosylation is found at Asn30, Asn66, Asn118, Asn123, Asn128, and Asn129. Intrachain disulfides connect Cys48-Cys74, Cys65-Cys105, and Cys88-Cys127. A helical transmembrane segment spans residues 140-164 (NLFYLTIIGHGLSIASLIISLIIFF). At 165-175 (YFKSLSCQRIT) the chain is on the cytoplasmic side. A helical membrane pass occupies residues 176-198 (LHKNLFFSFVCNSIVTIIHLTAV). Residues 199–209 (ANNQALVATNP) are Extracellular-facing. Residues 210–238 (VSCKVSQFIHLYLMGCNYFWMLCEGIYLH) traverse the membrane as a helical segment. Over 239 to 252 (TLIVVAVFAEKQHL) the chain is Cytoplasmic. The helical transmembrane segment at 253 to 273 (MWYYFLGWGFPLLPACIHAIA) threads the bilayer. The Extracellular segment spans residues 274 to 289 (RSLYYNDNCWISSDTH). The segment at 288–289 (TH) is required for RAMP3 interaction. A helical membrane pass occupies residues 290–314 (LLYIIHGPICAALLVNLFFLLNIVR). Residues 315-329 (VLITKLKVTHQAESN) lie on the Cytoplasmic side of the membrane. The helical transmembrane segment at 330 to 351 (LYMKAVRATLILVPLLGIEFVL) threads the bilayer. Residues 352-366 (FPWRPEGKVAEEVYD) lie on the Extracellular side of the membrane. A helical membrane pass occupies residues 367-387 (YVMHILMHYQGLLVSTIFCFF). Topologically, residues 388-464 (NGEVQAILRR…KPEKMYDLVM (77 aa)) are cytoplasmic. A phosphoserine mark is found at Ser420 and Ser445.

Belongs to the G-protein coupled receptor 2 family. Heterodimer of CALCRL and RAMP1; the receptor complex functions as CGRP receptor. Heterodimer of CALCRL and RAMP2 or CALCRL and RAMP3; the complexes function as adrenomedullin receptor.

Its subcellular location is the cell membrane. Its function is as follows. G protein-coupled receptor which specificity is determined by its interaction with receptor-activity-modifying proteins (RAMPs). Together with RAMP1, form the receptor complex for calcitonin-gene-related peptides CALCA/CGRP1 and CALCB/CGRP2. Together with RAMP2 or RAMP3, function as receptor complexes for adrenomedullin (ADM and ADM2). Ligand binding causes a conformation change that triggers signaling via guanine nucleotide-binding proteins (G proteins) and modulates the activity of downstream effectors. Activates cAMP-dependent pathway. This is Calcitonin gene-related peptide type 1 receptor from Rattus norvegicus (Rat).